The sequence spans 437 residues: Adenylosuccinate synthetase (437 aa).

Residues 12–18 and 40–42 each bind GTP; these read GDEGKGK and GHT. The active-site Proton acceptor is aspartate 13. Mg(2+)-binding residues include aspartate 13 and glycine 40. Residues 13–16, 38–41, threonine 128, arginine 142, glutamine 223, threonine 238, and arginine 302 contribute to the IMP site; these read DEGK and NAGH. The active-site Proton donor is histidine 41. Residue 298 to 304 participates in substrate binding; the sequence is TTTGRKR. Residues arginine 304, 330–332, and 412–414 contribute to the GTP site; these read KLD and SLG.

The protein belongs to the adenylosuccinate synthetase family. As to quaternary structure, homodimer. Mg(2+) is required as a cofactor.

It is found in the cytoplasm. The enzyme catalyses IMP + L-aspartate + GTP = N(6)-(1,2-dicarboxyethyl)-AMP + GDP + phosphate + 2 H(+). The protein operates within purine metabolism; AMP biosynthesis via de novo pathway; AMP from IMP: step 1/2. Its function is as follows. Plays an important role in the de novo pathway of purine nucleotide biosynthesis. Catalyzes the first committed step in the biosynthesis of AMP from IMP. This chain is Adenylosuccinate synthetase, found in Trichodesmium erythraeum (strain IMS101).